The chain runs to 205 residues: Probable thymidylate kinase (205 aa).

Gly10–Ser17 serves as a coordination point for ATP.

The protein belongs to the thymidylate kinase family.

It catalyses the reaction dTMP + ATP = dTDP + ADP. The chain is Probable thymidylate kinase from Methanosarcina barkeri (strain Fusaro / DSM 804).